The chain runs to 153 residues: Hydrogenase expression/formation protein HoxT (153 aa).

It belongs to the HupJ family.

This chain is Hydrogenase expression/formation protein HoxT (hoxT), found in Azotobacter vinelandii.